The sequence spans 171 residues: uncharacterized protein (171 aa).

The chain crosses the membrane as a helical span at residues 21–43 (GVAASLLILLAVYTIFQSTVVIA).

It is found in the membrane. This is an uncharacterized protein from Archaeoglobus fulgidus (strain ATCC 49558 / DSM 4304 / JCM 9628 / NBRC 100126 / VC-16).